The sequence spans 337 residues: DNA-directed RNA polymerase subunit alpha (337 aa).

The segment at 1–233 is alpha N-terminal domain (alpha-NTD); the sequence is MIQKNWQELI…DQLAIFVNFE (233 aa). The tract at residues 249–337 is alpha C-terminal domain (alpha-CTD); it reads FNPALLKKVD…DLAKRYEDQY (89 aa).

This sequence belongs to the RNA polymerase alpha chain family. In terms of assembly, homodimer. The RNAP catalytic core consists of 2 alpha, 1 beta, 1 beta' and 1 omega subunit. When a sigma factor is associated with the core the holoenzyme is formed, which can initiate transcription.

The catalysed reaction is RNA(n) + a ribonucleoside 5'-triphosphate = RNA(n+1) + diphosphate. Functionally, DNA-dependent RNA polymerase catalyzes the transcription of DNA into RNA using the four ribonucleoside triphosphates as substrates. In Brucella anthropi (strain ATCC 49188 / DSM 6882 / CCUG 24695 / JCM 21032 / LMG 3331 / NBRC 15819 / NCTC 12168 / Alc 37) (Ochrobactrum anthropi), this protein is DNA-directed RNA polymerase subunit alpha.